Consider the following 66-residue polypeptide: Large ribosomal subunit protein bL33c (66 aa).

This sequence belongs to the bacterial ribosomal protein bL33 family.

The protein resides in the plastid. It is found in the chloroplast. The chain is Large ribosomal subunit protein bL33c from Helianthus annuus (Common sunflower).